Reading from the N-terminus, the 366-residue chain is Spore germination protein GerM (366 aa).

2 disordered regions span residues 42–72 (TFVN…KADQ) and 346–366 (EKGE…TGSF). The segment covering 58–69 (KKTESEKSDTAK) has biased composition (basic and acidic residues). Polar residues predominate over residues 357–366 (RPSQVNTGSF).

Its function is as follows. Unknown. Affects both sporulation and germination. This chain is Spore germination protein GerM (gerM), found in Bacillus subtilis (strain 168).